A 266-amino-acid chain; its full sequence is Oxidoreductase aflX (266 aa).

Belongs to the avfA family.

The protein operates within mycotoxin biosynthesis; aflatoxin biosynthesis. Functionally, oxidoreductase; part of the gene cluster that mediates the biosynthesis of aflatoxins, a group of polyketide-derived furanocoumarins, and part of the most toxic and carcinogenic compounds among the known mycotoxins. The four major aflatoxins produced by A.parasiticus are aflatoxin B1 (AFB1), aflatoxin B2 (AFB2), aflatoxin G1 (AFG1) and aflatoxin G2 (AFG2). Within the aflatoxin pathway, the oxidoreductase aflX seems to be involved in the conversion of versicolorin A (VERA) to demethylsterigmatocystin (DMST), through probable epoxide ring-opening step following versicolorin A oxidation required for the formation of the xanthone ring. The biosynthesis of aflatoxins begins with the norsolorinic acid synthase aflC that combines a hexanoyl starter unit produced by the fatty acid synthase aflA/aflB and 7 malonyl-CoA extender units to synthesize the precursor NOR. The second step is the conversion of NOR to averantin and requires the norsolorinic acid ketoreductase aflD, which catalyzes the dehydration of norsolorinic acid to form (1'S)-averantin. The norsolorinic acid reductases aflE and aflF may also play a role in the conversion of NOR to AVN. The cytochrome P450 monooxygenase aflG then catalyzes the hydroxylation of AVN to 5'hydroxyaverantin (HAVN). The next step is performed by the 5'-hydroxyaverantin dehydrogenase aflH that transforms HAVN to 5'-oxoaverantin (OAVN) which is further converted to averufin (AVF) by aflK that plays a dual role in the pathway, as a 5'-oxoaverantin cyclase that mediates conversion of 5'-oxoaverantin, as well as a versicolorin B synthase in a later step in the pathway. The averufin oxidase aflI catalyzes the conversion of AVF to versiconal hemiacetal acetate (VHA). VHA is then the substrate for the versiconal hemiacetal acetate esterase aflJ to yield versiconal (VAL). Versicolorin B synthase aflK then converts VAL to versicolorin B (VERB) by closing the bisfuran ring of aflatoxin which is required for DNA-binding, thus giving to aflatoxin its activity as a mutagen. Then, the activity of the versicolorin B desaturase aflL leads to versicolorin A (VERA). A branch point starts from VERB since it can also be converted to dihydrodemethylsterigmatocystin (DMDHST), probably also by aflL, VERA being a precursor for aflatoxins B1 and G1, and DMDHST for aflatoxins B2 and G2. Next, the versicolorin reductase aflM and the cytochrome P450 monooxygenase aflN are involved in conversion of VERA to demethylsterigmatocystin (DMST). AflX and aflY seem also involved in this step, through probable aflX-mediated epoxide ring-opening step following versicolorin A oxidation and aflY-mediated Baeyer-Villiger oxidation required for the formation of the xanthone ring. The methyltransferase aflO then leads to the modification of DMST to sterigmatocystin (ST), and of DMDHST to dihydrosterigmatocystin (DHST). Both ST and DHST are then substrates of the O-methyltransferase aflP to yield O-methylsterigmatocystin (OMST) and dihydro-O-methylsterigmatocystin (DHOMST), respectively. Finally OMST is converted to aflatoxins B1 and G1, and DHOMST to aflatoxins B2 and G2, via the action of several enzymes including O-methylsterigmatocystin oxidoreductase aflQ, the cytochrome P450 monooxygenase aflU, but also the NADH-dependent flavin oxidoreductase nadA which is specifically required for the synthesis of AFG1. This is Oxidoreductase aflX from Aspergillus parasiticus (strain ATCC 56775 / NRRL 5862 / SRRC 143 / SU-1).